A 537-amino-acid polypeptide reads, in one-letter code: Probable protein kinase UbiB (537 aa).

A helical transmembrane segment spans residues 24–44 (LLFEQPLLPWWLASLRLLMPW). Positions 126-494 (RFDVEPLASA…RRRQGDNWAL (369 aa)) constitute a Protein kinase domain. ATP contacts are provided by residues 132 to 140 (LASASVAQV) and Lys-154. Asp-289 (proton acceptor) is an active-site residue. 2 helical membrane passes run 493–513 (ALRL…AGAV) and 515–535 (LSAP…YLIV).

Belongs to the ABC1 family. UbiB subfamily.

The protein resides in the cell inner membrane. It participates in cofactor biosynthesis; ubiquinone biosynthesis [regulation]. Its function is as follows. Is probably a protein kinase regulator of UbiI activity which is involved in aerobic coenzyme Q (ubiquinone) biosynthesis. This is Probable protein kinase UbiB from Pseudomonas entomophila (strain L48).